The chain runs to 508 residues: Photosystem II CP47 reaction center protein (508 aa).

A run of 6 helical transmembrane segments spans residues 21 to 36, 101 to 115, 140 to 156, 203 to 218, 237 to 252, and 457 to 472; these read SVHI…WAGS, IVFS…IWHW, GIHL…FGAF, IAAG…FHLS, VLSS…AFIV, and TFAL…HGAR.

The protein belongs to the PsbB/PsbC family. PsbB subfamily. PSII is composed of 1 copy each of membrane proteins PsbA, PsbB, PsbC, PsbD, PsbE, PsbF, PsbH, PsbI, PsbJ, PsbK, PsbL, PsbM, PsbT, PsbX, PsbY, PsbZ, Psb30/Ycf12, at least 3 peripheral proteins of the oxygen-evolving complex and a large number of cofactors. It forms dimeric complexes. Binds multiple chlorophylls. PSII binds additional chlorophylls, carotenoids and specific lipids. serves as cofactor.

The protein resides in the plastid. The protein localises to the chloroplast thylakoid membrane. One of the components of the core complex of photosystem II (PSII). It binds chlorophyll and helps catalyze the primary light-induced photochemical processes of PSII. PSII is a light-driven water:plastoquinone oxidoreductase, using light energy to abstract electrons from H(2)O, generating O(2) and a proton gradient subsequently used for ATP formation. In Pinus thunbergii (Japanese black pine), this protein is Photosystem II CP47 reaction center protein.